The primary structure comprises 143 residues: Small ribosomal subunit protein eS19B (143 aa).

It belongs to the eukaryotic ribosomal protein eS19 family. Component of the small ribosomal subunit (SSU). Mature yeast ribosomes consist of a small (40S) and a large (60S) subunit. The 40S small subunit contains 1 molecule of ribosomal RNA (18S rRNA) and at least 33 different proteins. The large 60S subunit contains 3 rRNA molecules (25S, 5.8S and 5S rRNA) and at least 46 different proteins.

Its subcellular location is the cytoplasm. It is found in the nucleus. In terms of biological role, component of the ribosome, a large ribonucleoprotein complex responsible for the synthesis of proteins in the cell. The small ribosomal subunit (SSU) binds messenger RNAs (mRNAs) and translates the encoded message by selecting cognate aminoacyl-transfer RNA (tRNA) molecules. The large subunit (LSU) contains the ribosomal catalytic site termed the peptidyl transferase center (PTC), which catalyzes the formation of peptide bonds, thereby polymerizing the amino acids delivered by tRNAs into a polypeptide chain. The nascent polypeptides leave the ribosome through a tunnel in the LSU and interact with protein factors that function in enzymatic processing, targeting, and the membrane insertion of nascent chains at the exit of the ribosomal tunnel. eS19 is required for proper maturation of the small (40S) ribosomal subunit. Binds to 40S pre-ribosomal particles, probably required after association of NOC4 but before association of ENP1, TSR1 and RIO2 with 20/21S pre-rRNA. This chain is Small ribosomal subunit protein eS19B (rps1902), found in Schizosaccharomyces pombe (strain 972 / ATCC 24843) (Fission yeast).